The sequence spans 955 residues: Glycine dehydrogenase (decarboxylating) (955 aa).

An N6-(pyridoxal phosphate)lysine modification is found at lysine 705.

This sequence belongs to the GcvP family. As to quaternary structure, the glycine cleavage system is composed of four proteins: P, T, L and H. Requires pyridoxal 5'-phosphate as cofactor.

The enzyme catalyses N(6)-[(R)-lipoyl]-L-lysyl-[glycine-cleavage complex H protein] + glycine + H(+) = N(6)-[(R)-S(8)-aminomethyldihydrolipoyl]-L-lysyl-[glycine-cleavage complex H protein] + CO2. The glycine cleavage system catalyzes the degradation of glycine. The P protein binds the alpha-amino group of glycine through its pyridoxal phosphate cofactor; CO(2) is released and the remaining methylamine moiety is then transferred to the lipoamide cofactor of the H protein. In Aliivibrio fischeri (strain MJ11) (Vibrio fischeri), this protein is Glycine dehydrogenase (decarboxylating).